A 90-amino-acid chain; its full sequence is MAVTYEKTFEIEIINELSASVYNRVLNYVLNHELDTKNTRLLEVNLLNQLEVAQEVDLFQQPFEELQAIHEYWRSMNQYSKQILNKEKVA.

Belongs to the epsilon antitoxin family. As to quaternary structure, in the presence of the zeta toxin, forms an inactive PezA(2)PezT(2) heterotetramer.

In terms of biological role, antitoxin component of a type II toxin-antitoxin (TA) system. Neutralizes the toxic effect of zeta toxin. Part of a postsegregational killing (PSK) system involved in the killing of plasmid-free cells. Continuous synthesis of the epsilon antitoxin is required to counteract the zeta toxin. The sequence is that of Antitoxin epsilon 1 from Enterococcus faecalis (Streptococcus faecalis).